A 307-amino-acid chain; its full sequence is Ribosomal RNA small subunit methyltransferase H (307 aa).

S-adenosyl-L-methionine is bound by residues 33-35 (GGY), Asp51, Phe82, Asp96, and Gln103.

The protein belongs to the methyltransferase superfamily. RsmH family.

The protein localises to the cytoplasm. The catalysed reaction is cytidine(1402) in 16S rRNA + S-adenosyl-L-methionine = N(4)-methylcytidine(1402) in 16S rRNA + S-adenosyl-L-homocysteine + H(+). Functionally, specifically methylates the N4 position of cytidine in position 1402 (C1402) of 16S rRNA. The sequence is that of Ribosomal RNA small subunit methyltransferase H from Rickettsia massiliae (strain Mtu5).